We begin with the raw amino-acid sequence, 442 residues long: Proline--tRNA ligase (442 aa).

Belongs to the class-II aminoacyl-tRNA synthetase family. ProS type 2 subfamily. Homodimer.

The protein resides in the cytoplasm. The catalysed reaction is tRNA(Pro) + L-proline + ATP = L-prolyl-tRNA(Pro) + AMP + diphosphate. In terms of biological role, catalyzes the attachment of proline to tRNA(Pro) in a two-step reaction: proline is first activated by ATP to form Pro-AMP and then transferred to the acceptor end of tRNA(Pro). This is Proline--tRNA ligase from Brucella suis (strain ATCC 23445 / NCTC 10510).